Here is a 521-residue protein sequence, read N- to C-terminus: Bifunctional purine biosynthesis protein PurH (521 aa).

The region spanning 1–145 is the MGS-like domain; it reads MIKQALISVS…KNHRDVTVVV (145 aa).

Belongs to the PurH family.

The catalysed reaction is (6R)-10-formyltetrahydrofolate + 5-amino-1-(5-phospho-beta-D-ribosyl)imidazole-4-carboxamide = 5-formamido-1-(5-phospho-D-ribosyl)imidazole-4-carboxamide + (6S)-5,6,7,8-tetrahydrofolate. It catalyses the reaction IMP + H2O = 5-formamido-1-(5-phospho-D-ribosyl)imidazole-4-carboxamide. It participates in purine metabolism; IMP biosynthesis via de novo pathway; 5-formamido-1-(5-phospho-D-ribosyl)imidazole-4-carboxamide from 5-amino-1-(5-phospho-D-ribosyl)imidazole-4-carboxamide (10-formyl THF route): step 1/1. The protein operates within purine metabolism; IMP biosynthesis via de novo pathway; IMP from 5-formamido-1-(5-phospho-D-ribosyl)imidazole-4-carboxamide: step 1/1. The polypeptide is Bifunctional purine biosynthesis protein PurH (Burkholderia cenocepacia (strain HI2424)).